The sequence spans 399 residues: MKYIVLLGDGMSDEPMQELGGKTPLQAARTPHMDAMARRGRIGLARTVPEGYPPGSDVANLSVFGYDPRACYTGRSPLEAASMGVELGSADVAFRVNLVNLAPTRGTLVMNDYSAGHISTAEGRELIEAIQGVMGTDEFQFYPGVGYRHLMVWRNGKCGMTVVPPHDISGQSILEHLPKGEGAERLIELMNSSQLVLNNHPQYRRRLEEGKVPANSIWLWGHGKAPRMASFHEKFGLTGAVISAVDLVRGIGVCAGLDVIKVEGATGYIDTNYEGKVTAALEALEAHDYVYLHVEAPDEAGHGGNLEHKLKAIEDFDARVVGPIMAGMEKFGSYRILCTPDHPTPLRLKTHTDAPVPFVLFSGETSENAGVAGYDEESARSAGLVVEDGFRLMEMMLDR.

It belongs to the BPG-independent phosphoglycerate mutase family. A-PGAM subfamily.

The catalysed reaction is (2R)-2-phosphoglycerate = (2R)-3-phosphoglycerate. The protein operates within carbohydrate degradation; glycolysis; pyruvate from D-glyceraldehyde 3-phosphate: step 3/5. Functionally, catalyzes the interconversion of 2-phosphoglycerate and 3-phosphoglycerate. The polypeptide is Probable 2,3-bisphosphoglycerate-independent phosphoglycerate mutase (Geobacter sulfurreducens (strain ATCC 51573 / DSM 12127 / PCA)).